Consider the following 418-residue polypeptide: Beta-2 adrenergic receptor (418 aa).

Residues 1–34 (MGQPGNRSVFLLAPNGSHAPDQDVPQERDEAWVV) lie on the Extracellular side of the membrane. N-linked (GlcNAc...) asparagine glycans are attached at residues Asn6 and Asn15. Residues 35-58 (GMAIVMSLIVLAIVFGNVLVITAI) traverse the membrane as a helical segment. At 59-71 (AKFERLQTVTNYF) the chain is on the cytoplasmic side. A helical transmembrane segment spans residues 72 to 95 (ITSLACADLVMGLAVVPFGASHIL). Over 96-106 (MKMWTFGSFWC) the chain is Extracellular. 2 disulfides stabilise this stretch: Cys106/Cys191 and Cys184/Cys190. A helical transmembrane segment spans residues 107 to 129 (EFWISIDVLCVTASIETLCVIAV). Residues 130–150 (DRYLAITSPFKYQCLLTKNKA) lie on the Cytoplasmic side of the membrane. Tyr141 carries the phosphotyrosine modification. The helical transmembrane segment at 151 to 174 (RVVILMVWVVSGLISFLPIKMHWY) threads the bilayer. Topologically, residues 175-196 (QATHREALNCYAEEACCDFFTN) are extracellular. Residues 197 to 220 (QPYAIASSIVSFYLPLVVMVFVYS) traverse the membrane as a helical segment. Residues 221 to 274 (RVFQVARRQLQKIDKSEGRFHAQNLSQAEQDGRSGPGHRRSSKFCLKEHKALKT) lie on the Cytoplasmic side of the membrane. Ser246 bears the Phosphoserine mark. Ser261 and Ser262 each carry phosphoserine; by PKA. Residue Cys265 is the site of S-palmitoyl cysteine attachment. The chain crosses the membrane as a helical span at residues 275 to 298 (LGIIMGTFTLCWLPFFIVNIVHGI). The Extracellular portion of the chain corresponds to 299-305 (HDNLIPK). A helical membrane pass occupies residues 306 to 329 (EVYILLNWVGYVNSAFNPLIYCRS). Residues 330-418 (PDFRMAFQEL…RNCSTNDSML (89 aa)) lie on the Cytoplasmic side of the membrane. The S-palmitoyl cysteine moiety is linked to residue Cys341. Ser345 and Ser346 each carry phosphoserine; by PKA. Ser355 and Ser356 each carry phosphoserine; by BARK. The segment at 381 to 418 (RLCEDAPGPEGCAHRQGTVPDDSTDSQGRNCSTNDSML) is disordered. 2 positions are modified to 4-hydroxyproline: Pro387 and Pro400. Over residues 405–418 (DSQGRNCSTNDSML) the composition is skewed to polar residues. The PDZ-binding signature appears at 415–418 (DSML).

Belongs to the G-protein coupled receptor 1 family. Adrenergic receptor subfamily. ADRB2 sub-subfamily. As to quaternary structure, binds NHERF1 and GPRASP1. Interacts with ARRB1 and ARRB2. Interacts with SRC. Interacts with USP20 and USP33. Interacts with VHL; the interaction, which is increased on hydroxylation of ADRB2, ubiquitinates ADRB2 leading to its degradation. Interacts with EGLN3; the interaction hydroxylates ADRB2 facilitating VHL-E3 ligase-mediated ubiquitination. Interacts (via PDZ-binding motif) with SNX27 (via PDZ domain); the interaction is required when endocytosed to prevent degradation in lysosomes and promote recycling to the plasma membrane. Interacts with CNIH4. Interacts with ARRDC3. Interacts with NEDD4. Interacts with MARCHF2. Palmitoylated; may reduce accessibility of Ser-345 and Ser-346 by anchoring Cys-341 to the plasma membrane. Agonist stimulation promotes depalmitoylation and further allows Ser-345 and Ser-346 phosphorylation. In terms of processing, phosphorylated by PKA and BARK upon agonist stimulation, which mediates homologous desensitization of the receptor. PKA-mediated phosphorylation seems to facilitate phosphorylation by BARK. Post-translationally, phosphorylation of Tyr-141 is induced by insulin and leads to supersensitization of the receptor. Polyubiquitinated. Agonist-induced ubiquitination leads to sort internalized receptors to the lysosomes for degradation. Deubiquitination by USP20 and USP33, leads to ADRB2 recycling and resensitization after prolonged agonist stimulation. USP20 and USP33 are constitutively associated and are dissociated immediately after agonist stimulation. Ubiquitination by the VHL-E3 ligase complex is oxygen-dependent. In terms of processing, hydroxylation by EGLN3 occurs only under normoxia and increases the interaction with VHL and the subsequent ubiquitination and degradation of ADRB2. Post-translationally, palmitoylated. Mainly palmitoylated at Cys-341. Palmitoylation may reduce accessibility of phosphorylation sites by anchoring the receptor to the plasma membrane. Agonist stimulation promotes depalmitoylation and further allows Ser-345 and Ser-346 phosphorylation. Also undergoes transient, ligand-induced palmitoylation at Cys-265 probably by ZDHHC9, ZDHHC14 and ZDHHC18 within the Golgi. Palmitoylation at Cys-265 requires phosphorylation by PKA and receptor internalization and stabilizes the receptor. Could be depalmitoylated by LYPLA1 at the plasma membrane. In terms of tissue distribution, expressed in heart, liver, lung, skeletal muscle and subcutaneous adipose tissue.

The protein resides in the cell membrane. It localises to the early endosome. It is found in the golgi apparatus. Beta-adrenergic receptors mediate the catecholamine-induced activation of adenylate cyclase through the action of G proteins. The beta-2-adrenergic receptor binds epinephrine with an approximately 30-fold greater affinity than it does norepinephrine. This chain is Beta-2 adrenergic receptor (ADRB2), found in Sus scrofa (Pig).